Consider the following 862-residue polypeptide: Transcription initiation factor TFIID subunit 4B (862 aa).

The sufficient for interaction with ZNF628 stretch occupies residues 100–241 (NTTTIQFPAN…TPSNEPNLKA (142 aa)). Residues 219–237 (VTTLKPSSLGASSTPSNEP) are compositionally biased toward polar residues. A disordered region spans residues 219–239 (VTTLKPSSLGASSTPSNEPNL). The TAFH domain maps to 256-353 (LENVKKCKNF…CVQQTSSDMV (98 aa)). Positions 511–533 (PGPVLSQPAGIPQAVQVKQLVVQ) are required for interaction with P65/RELA. The short motif at 516 to 556 (SQPAGIPQAVQVKQLVVQQPSGGNEKQVTTISHSSTLTIQK) is the Nuclear export signal element. Serine 595 carries the post-translational modification Phosphoserine. Residues 653–702 (PFLFIGALQKRILDIGKKHDITELNSDAVNLISQATQERLRGLLEKLTAI) enclose the Histone-fold domain. A coiled-coil region spans residues 722–787 (TRSQLKFLEK…LAQIQHRDAN (66 aa)). The segment at 830 to 862 (PRITRICLRDLIFCMEQEREMKYSRALYLALLK) is required for interaction with TAF12.

Belongs to the TAF4 family. TFIID is composed of TATA binding protein (TBP) and a number of TBP-associated factors (TAFs). Heterodimerizes with TAF12/TFII20 via the C-terminal H2A-like histone-fold domain. This heterodimer forms a histone-like octamer with the TAF6/TAFII70-TAF9/TAFII31 heterodimer. Interacts with P65/RELA homodimers and P65/RELA-REL heterodimers. Interaction with POU2AF1, via its C-terminal activation domain, is required for octamer-dependent transcription. Interacts with ZNF628. In terms of processing, under stimulation by forskolin, Isoform 1 is phosphorylated by protein kinase A (PKA). As to expression, preferentially expressed in ovarian granulosa cells (at protein level). Highly expressed in B-cells.

It is found in the nucleus. Its subcellular location is the cytoplasm. Cell type-specific subunit of the general transcription factor TFIID that may function as a gene-selective coactivator in certain cells. TFIID is a multimeric protein complex that plays a central role in mediating promoter responses to various activators and repressors. TAF4B is a transcriptional coactivator of the p65/RELA NF-kappa-B subunit. Involved in the activation of a subset of antiapoptotic genes including TNFAIP3. May be involved in regulating folliculogenesis. Through interaction with OCBA/POU2AF1, acts as a coactivator of B-cell-specific transcription. Plays a role in spermiogenesis and oogenesis. This is Transcription initiation factor TFIID subunit 4B (TAF4B) from Homo sapiens (Human).